The following is a 520-amino-acid chain: Cytosol aminopeptidase (520 aa).

Leu200, Met201, Lys280, and Asp285 together coordinate Zn(2+). Substrate-binding residues include Lys280, Asp285, Ser290, and Lys292. Asp285 lines the Mg(2+) pocket. Lys292 is a catalytic residue. Positions 301, 303, 362, and 364 each coordinate Zn(2+). Positions 303 and 362 each coordinate substrate. Positions 362 and 364 each coordinate Mg(2+). Residue Arg366 is part of the active site.

It belongs to the peptidase M17 family. In terms of assembly, homohexamer. Zn(2+) serves as cofactor. Mn(2+) is required as a cofactor.

The protein resides in the cytoplasm. The enzyme catalyses Release of an N-terminal amino acid, Xaa-|-Yaa-, in which Xaa is preferably Leu, but may be other amino acids including Pro although not Arg or Lys, and Yaa may be Pro. Amino acid amides and methyl esters are also readily hydrolyzed, but rates on arylamides are exceedingly low.. The catalysed reaction is an S-substituted L-cysteinylglycine + H2O = an S-substituted L-cysteine + glycine. It catalyses the reaction L-cysteinylglycine + H2O = L-cysteine + glycine. It carries out the reaction S-benzyl-L-cysteinylglycine + H2O = S-benzyl-L-cysteine + glycine. The enzyme catalyses Release of N-terminal proline from a peptide.. Its function is as follows. Cytosolic metallopeptidase that catalyzes the removal of unsubstituted N-terminal hydrophobic amino acids from various peptides. The presence of Zn(2+) ions is essential for the peptidase activity, and the association with other cofactors can modulate the substrate spectificity of the enzyme. For instance, in the presence of Mn(2+), it displays a specific Cys-Gly hydrolyzing activity of Cys-Gly-S-conjugates. Involved in the metabolism of glutathione and in the degradation of glutathione S-conjugates, which may play a role in the control of the cell redox status. The protein is Cytosol aminopeptidase (lap3) of Xenopus tropicalis (Western clawed frog).